Reading from the N-terminus, the 198-residue chain is Na(+)-translocating NADH-quinone reductase subunit E (198 aa).

6 helical membrane passes run 11-31 (SIFI…FLAV), 39-59 (FGLG…NNLV), 77-97 (FLNF…LEMV), 110-130 (GIFL…SFMV), 140-160 (IVYG…LAGI), and 176-196 (LGIT…FSGV).

Belongs to the NqrDE/RnfAE family. As to quaternary structure, composed of six subunits; NqrA, NqrB, NqrC, NqrD, NqrE and NqrF.

Its subcellular location is the cell inner membrane. It carries out the reaction a ubiquinone + n Na(+)(in) + NADH + H(+) = a ubiquinol + n Na(+)(out) + NAD(+). Functionally, NQR complex catalyzes the reduction of ubiquinone-1 to ubiquinol by two successive reactions, coupled with the transport of Na(+) ions from the cytoplasm to the periplasm. NqrA to NqrE are probably involved in the second step, the conversion of ubisemiquinone to ubiquinol. This Aliivibrio salmonicida (strain LFI1238) (Vibrio salmonicida (strain LFI1238)) protein is Na(+)-translocating NADH-quinone reductase subunit E.